Reading from the N-terminus, the 474-residue chain is Bifunctional protein HldE (474 aa).

Residues 1 to 317 (MKLSMPRFDR…RRAVQREQGS (317 aa)) are ribokinase. 194–197 (NLAE) contributes to the ATP binding site. D263 is a catalytic residue. The segment at 343-474 (FTNGCFDILH…GIVEKIRRQP (132 aa)) is cytidylyltransferase.

It in the N-terminal section; belongs to the carbohydrate kinase PfkB family. In the C-terminal section; belongs to the cytidylyltransferase family. In terms of assembly, homodimer.

It catalyses the reaction D-glycero-beta-D-manno-heptose 7-phosphate + ATP = D-glycero-beta-D-manno-heptose 1,7-bisphosphate + ADP + H(+). It carries out the reaction D-glycero-beta-D-manno-heptose 1-phosphate + ATP + H(+) = ADP-D-glycero-beta-D-manno-heptose + diphosphate. Its pathway is nucleotide-sugar biosynthesis; ADP-L-glycero-beta-D-manno-heptose biosynthesis; ADP-L-glycero-beta-D-manno-heptose from D-glycero-beta-D-manno-heptose 7-phosphate: step 1/4. It participates in nucleotide-sugar biosynthesis; ADP-L-glycero-beta-D-manno-heptose biosynthesis; ADP-L-glycero-beta-D-manno-heptose from D-glycero-beta-D-manno-heptose 7-phosphate: step 3/4. In terms of biological role, catalyzes the phosphorylation of D-glycero-D-manno-heptose 7-phosphate at the C-1 position to selectively form D-glycero-beta-D-manno-heptose-1,7-bisphosphate. Functionally, catalyzes the ADP transfer from ATP to D-glycero-beta-D-manno-heptose 1-phosphate, yielding ADP-D-glycero-beta-D-manno-heptose. This chain is Bifunctional protein HldE, found in Azotobacter vinelandii (strain DJ / ATCC BAA-1303).